The sequence spans 373 residues: 3 beta-hydroxysteroid dehydrogenase/Delta 5--&gt;4-isomerase type 1 (373 aa).

Residues 10–15 (GAGGFL), Y155, and K159 contribute to the NADP(+) site. The active-site Proton donor is K159. A helical membrane pass occupies residues 288–308 (LSLMYWIGFLLEIVSFLLRPI).

Belongs to the 3-beta-HSD family. In terms of tissue distribution, placenta and skin. Predominantly expressed in mammary gland tissue.

It is found in the endoplasmic reticulum membrane. The protein localises to the mitochondrion membrane. The catalysed reaction is a 3beta-hydroxy-Delta(5)-steroid + NAD(+) = a 3-oxo-Delta(5)-steroid + NADH + H(+). It carries out the reaction pregnenolone + NAD(+) = pregn-5-ene-3,20-dione + NADH + H(+). It catalyses the reaction 3beta-hydroxyandrost-5-en-17-one + NAD(+) = androst-5-ene-3,17-dione + NADH + H(+). The enzyme catalyses androst-5-en-3beta,17beta-diol + NAD(+) = 17beta-hydroxy-androst-5-en-3-one + NADH + H(+). The catalysed reaction is a 3beta-hydroxysteroid + NADP(+) = a 3-oxosteroid + NADPH + H(+). It carries out the reaction 5alpha-androstane-3beta,17beta-diol + NADP(+) = 17beta-hydroxy-5alpha-androstan-3-one + NADPH + H(+). It catalyses the reaction 3beta-hydroxy-5alpha-androstan-17-one + NADP(+) = 5alpha-androstan-3,17-dione + NADPH + H(+). The enzyme catalyses a 3-oxo-Delta(5)-steroid = a 3-oxo-Delta(4)-steroid. The catalysed reaction is pregn-5-ene-3,20-dione = progesterone. It carries out the reaction androst-5-ene-3,17-dione = androst-4-ene-3,17-dione. It catalyses the reaction 17beta-hydroxy-androst-5-en-3-one = testosterone. The enzyme catalyses 5alpha-androstane-3beta,17beta-diol + NAD(+) = 17beta-hydroxy-5alpha-androstan-3-one + NADH + H(+). Its pathway is steroid hormone biosynthesis. It functions in the pathway steroid metabolism. Its function is as follows. A bifunctional enzyme responsible for the oxidation and isomerization of 3beta-hydroxy-Delta(5)-steroid precursors to 3-oxo-Delta(4)-steroids, an essential step in steroid hormone biosynthesis. Specifically catalyzes the conversion of pregnenolone to progesterone, 17alpha-hydroxypregnenolone to 17alpha-hydroxyprogesterone, dehydroepiandrosterone (DHEA) to 4-androstenedione, and androstenediol to testosterone. Additionally, catalyzes the interconversion between 3beta-hydroxy and 3-oxo-5alpha-androstane steroids controlling the bioavalability of the active forms. Specifically converts dihydrotestosterone to its inactive form 5alpha-androstanediol, that does not bind androgen receptor/AR. Also converts androstanedione, a precursor of testosterone and estrone, to epiandrosterone. Expected to use NAD(+) as preferred electron donor for the 3beta-hydroxy-steroid dehydrogenase activity and NADPH for the 3-ketosteroid reductase activity. This is 3 beta-hydroxysteroid dehydrogenase/Delta 5--&gt;4-isomerase type 1 from Homo sapiens (Human).